The primary structure comprises 408 residues: Phosphoenolpyruvate/phosphate translocator 1, chloroplastic (408 aa).

The transit peptide at 1-85 (MQSSAVFSLS…SLDTNRFRTA (85 aa)) directs the protein to the chloroplast. Ala-86 is modified (N-acetylalanine). A run of 8 helical transmembrane segments spans residues 105–125 (VLEL…FNIY), 137–157 (MTVT…MWVL), 165–185 (ISGA…LGNL), 198–218 (FTHT…AMFL), 222–242 (PTPW…LASI), 283–303 (ITLF…VTFF), 324–346 (IYTK…YMIL), and 377–396 (VSPV…FLYS). In terms of domain architecture, EamA spans 124 to 241 (IYNKQVLKAL…PIVGGVALAS (118 aa)).

It belongs to the TPT transporter family. PPT (TC 2.A.7.9) subfamily. Expressed in root columella, lateral root cap and root vasculature tissue. In leaves, highly expressed in xylem parenchyma cells. In flowers, expressed in sepals, petals, filaments of the stamens, anthers and stigma.

The protein resides in the plastid. It localises to the chloroplast membrane. In terms of biological role, phosphoenolpyruvate/phosphate translocator that transports phosphoenolpyruvate (PEP), 2-phosphoglycerate, 3-phosphoglycerate and dihydroxyacetone phosphate. Imports PEP to the chloroplast stroma as one substrate of the shikimate pathway, from which aromatic amino acids and a variety of secondary products derive. Required for correct leaf mesophyll cell development and expression of chlorophyll a/b binding protein 3 (CAB3). The sequence is that of Phosphoenolpyruvate/phosphate translocator 1, chloroplastic (PPT1) from Arabidopsis thaliana (Mouse-ear cress).